A 146-amino-acid polypeptide reads, in one-letter code: Protein disulfide-isomerase 5-1 (146 aa).

The first 25 residues, 1–25 (MTLGARLVAPMIILLLFIPIELVKA), serve as a signal peptide directing secretion. The region spanning 26–133 (EVITLTPETF…LKAFVVEETE (108 aa)) is the Thioredoxin domain. Catalysis depends on nucleophile residues cysteine 55 and cysteine 58. Cysteine 55 and cysteine 58 are joined by a disulfide.

It belongs to the protein disulfide isomerase family.

In terms of biological role, acts as a protein-folding catalyst that interacts with nascent polypeptides to catalyze the formation, isomerization, and reduction or oxidation of disulfide bonds. The protein is Protein disulfide-isomerase 5-1 (PDIL5-1) of Arabidopsis thaliana (Mouse-ear cress).